The primary structure comprises 99 residues: Large ribosomal subunit protein uL23 (99 aa).

It belongs to the universal ribosomal protein uL23 family. In terms of assembly, part of the 50S ribosomal subunit. Contacts protein L29, and trigger factor when it is bound to the ribosome.

Functionally, one of the early assembly proteins it binds 23S rRNA. One of the proteins that surrounds the polypeptide exit tunnel on the outside of the ribosome. Forms the main docking site for trigger factor binding to the ribosome. This Synechococcus sp. (strain JA-2-3B'a(2-13)) (Cyanobacteria bacterium Yellowstone B-Prime) protein is Large ribosomal subunit protein uL23.